The following is a 218-amino-acid chain: Cytochrome b6 (218 aa).

Residues 35 to 55 (IFYCLGGITLVCFLIQFATGF) traverse the membrane as a helical segment. Heme c is bound at residue Cys38. Heme b-binding residues include His89 and His103. Transmembrane regions (helical) follow at residues 93–113 (ASMMVLMLILHVFRVYLTGGF), 119–139 (LTWVTGVTMAVITVSFGVTGY), and 189–209 (LHTFVMPWLLAVFMLMHFLMI). Positions 190 and 205 each coordinate heme b.

It belongs to the cytochrome b family. PetB subfamily. In terms of assembly, the 4 large subunits of the cytochrome b6-f complex are cytochrome b6, subunit IV (17 kDa polypeptide, PetD), cytochrome f and the Rieske protein, while the 4 small subunits are PetG, PetL, PetM and PetN. The complex functions as a dimer. It depends on heme b as a cofactor. Heme c serves as cofactor.

Its subcellular location is the cellular thylakoid membrane. Component of the cytochrome b6-f complex, which mediates electron transfer between photosystem II (PSII) and photosystem I (PSI), cyclic electron flow around PSI, and state transitions. This Parasynechococcus marenigrum (strain WH8102) protein is Cytochrome b6.